The chain runs to 203 residues: Translation initiation factor IF-3 (203 aa).

Residues 168-203 (QLSPKKKESATKKPATPKPATPAAVKAEKPAGDNEE) form a disordered region. Residues 193-203 (KAEKPAGDNEE) show a composition bias toward basic and acidic residues.

This sequence belongs to the IF-3 family. In terms of assembly, monomer.

The protein localises to the cytoplasm. In terms of biological role, IF-3 binds to the 30S ribosomal subunit and shifts the equilibrium between 70S ribosomes and their 50S and 30S subunits in favor of the free subunits, thus enhancing the availability of 30S subunits on which protein synthesis initiation begins. This is Translation initiation factor IF-3 from Bacteroides fragilis (strain ATCC 25285 / DSM 2151 / CCUG 4856 / JCM 11019 / LMG 10263 / NCTC 9343 / Onslow / VPI 2553 / EN-2).